The following is a 67-amino-acid chain: Probable Sec-independent protein translocase protein TatE (67 aa).

Residues 4–21 (ISITKLLVVAALVVLLFG) traverse the membrane as a helical segment.

The protein belongs to the TatA/E family. TatE subfamily.

The protein resides in the cell inner membrane. In terms of biological role, part of the twin-arginine translocation (Tat) system that transports large folded proteins containing a characteristic twin-arginine motif in their signal peptide across membranes. TatE shares overlapping functions with TatA. The chain is Probable Sec-independent protein translocase protein TatE from Salmonella dublin (strain CT_02021853).